Here is a 453-residue protein sequence, read N- to C-terminus: Homogentisate 1,2-dioxygenase (453 aa).

The active-site Proton acceptor is the histidine 304. The Fe cation site is built by histidine 347 and glutamate 353. Homogentisate is bound by residues tyrosine 362 and histidine 383. Histidine 383 provides a ligand contact to Fe cation.

This sequence belongs to the homogentisate dioxygenase family. Hexamer; dimer of trimers. It depends on Fe cation as a cofactor.

The enzyme catalyses homogentisate + O2 = 4-maleylacetoacetate + H(+). The protein operates within amino-acid degradation; L-phenylalanine degradation; acetoacetate and fumarate from L-phenylalanine: step 4/6. Functionally, involved in the catabolism of homogentisate (2,5-dihydroxyphenylacetate or 2,5-OH-PhAc), a central intermediate in the degradation of phenylalanine and tyrosine. Catalyzes the oxidative ring cleavage of the aromatic ring of homogentisate to yield maleylacetoacetate. This is Homogentisate 1,2-dioxygenase from Sinorhizobium fredii (strain NBRC 101917 / NGR234).